The primary structure comprises 223 residues: DNA replication complex GINS protein SLD5 (223 aa).

Position 1 is an N-acetylmethionine (methionine 1). Residues serine 12 and serine 16 each carry the phosphoserine modification. Residues 166 to 223 (DLDAYVFLRVKERQENILVEPENDEQRDYVIDLEEGSQHLMRYRTVAPLVASGAIQLI) are important for GINS complex assembly.

The protein belongs to the GINS4/SLD5 family. As to quaternary structure, component of the CMG helicase complex, a hexameric ring of related MCM2-7 subunits stabilized by CDC45 and the tetrameric GINS complex. Associated with ORC2. Interacts with HELB.

Its subcellular location is the nucleus. The protein resides in the chromosome. In terms of biological role, required for initiation of chromosomal DNA replication. Core component of CDC45-MCM-GINS (CMG) helicase, the molecular machine that unwinds template DNA during replication, and around which the replisome is built. The sequence is that of DNA replication complex GINS protein SLD5 (GINS4) from Bos taurus (Bovine).